A 462-amino-acid polypeptide reads, in one-letter code: MTEKKTWSDRFEGSLHPAIAYFNASIEFDIELIEYDLTGSIAHAKMLAHTGIISETEAQQLVTGLEQIRAEYREGQFNPGIDQEDVHFAVERRLTEIIGDVGKKLHTARSRNDQVGTDIRLYLRDQIDQIRGQIREFQQVLLDHAQNHVETLIPGYTHLQRAQPVSLAHHLLAYFHMAQRDWERLGEIRKRTNISPLGSGALAGTTFPIDRHYSAQLLQFEGVYPNSLDGVSDRDFAIEFLNAASLIMVHLSRLSEEMILWSSQEFSFITLTDSCATGSSIMPQKKNPDVPELIRGKTGRVFGHLQGLLVLMKGLPLAYNKDLQEDKEALFDGVKTVKGCLEAMTILLSEGIKFKTERLTQAVNEDFSNATDVADYLAARGVPFREAYNLVGKVVKTSLAAGKLLKDLTLDQWKELHPAFEADIYEAIAPSQVVAARNSYGGTGFKQVRQAILTAKTLLESN.

This sequence belongs to the lyase 1 family. Argininosuccinate lyase subfamily.

Its subcellular location is the cytoplasm. It carries out the reaction 2-(N(omega)-L-arginino)succinate = fumarate + L-arginine. The protein operates within amino-acid biosynthesis; L-arginine biosynthesis; L-arginine from L-ornithine and carbamoyl phosphate: step 3/3. This is Argininosuccinate lyase from Gloeothece citriformis (strain PCC 7424) (Cyanothece sp. (strain PCC 7424)).